Consider the following 273-residue polypeptide: NH(3)-dependent NAD(+) synthetase (273 aa).

ATP is bound at residue 47-54 (GISGGQDS). Asp53 contributes to the Mg(2+) binding site. Arg139 is a binding site for deamido-NAD(+). ATP is bound at residue Thr159. Glu164 is a binding site for Mg(2+). Deamido-NAD(+) contacts are provided by Lys172 and Asp179. ATP-binding residues include Lys188 and Thr210. 259–260 (HK) contributes to the deamido-NAD(+) binding site.

The protein belongs to the NAD synthetase family. As to quaternary structure, homodimer.

It catalyses the reaction deamido-NAD(+) + NH4(+) + ATP = AMP + diphosphate + NAD(+) + H(+). It functions in the pathway cofactor biosynthesis; NAD(+) biosynthesis; NAD(+) from deamido-NAD(+) (ammonia route): step 1/1. Catalyzes the ATP-dependent amidation of deamido-NAD to form NAD. Uses ammonia as a nitrogen source. This is NH(3)-dependent NAD(+) synthetase from Staphylococcus aureus (strain bovine RF122 / ET3-1).